Consider the following 97-residue polypeptide: Large ribosomal subunit protein bL27 (97 aa).

Residues 1–10 show a composition bias toward polar residues; sequence MVKLNLSNLQ. A propeptide spanning residues 1 to 12 is cleaved from the precursor; that stretch reads MVKLNLSNLQHF. A disordered region spans residues 1–38; that stretch reads MVKLNLSNLQHFAHKKGGGSTSNGRDSQAKRLGAKAAD.

Belongs to the bacterial ribosomal protein bL27 family. Post-translationally, the N-terminus is cleaved by ribosomal processing cysteine protease Prp.

The protein is Large ribosomal subunit protein bL27 of Streptococcus equi subsp. zooepidemicus (strain H70).